The primary structure comprises 490 residues: Protein twist (490 aa).

3 disordered regions span residues 48–72 (QLQHQQQHLHSHQHHQQHHQQQHAQ), 96–165 (PSNE…TGGS), and 244–264 (QQQQSQQLQQQQPHQQSHAQM). The span at 54-68 (QHLHSHQHHQQHHQQ) shows a compositional bias: basic residues. Low complexity-rich tracts occupy residues 102-134 (STSSNQSAQSTSLELNNNNTSSNTNSSGNNPSG) and 244-263 (QQQQSQQLQQQQPHQQSHAQ). Residues serine 325 and serine 328 each carry the phosphoserine modification. The disordered stretch occupies residues 330–361 (LDGSDAGGKAFRKPRRRLKRKPSKTEETDEFS). Residues 339 to 351 (AFRKPRRRLKRKP) are compositionally biased toward basic residues. Residues 362–413 (NQRVMANVRERQRTQSLNDAFKSLQQIIPTLPSDKLSKIQTLKLATRYIDFL) enclose the bHLH domain.

Efficient DNA binding requires dimerization with another bHLH protein. Homodimer. Interacts with akirin. In terms of tissue distribution, expressed in embryonic abdomen; a single cell ventrally, pairs of cells laterally and three cells dorsally in each hemisegment. In the thorax, there are patches of cells associated with the imaginal disks. During larval development, cells proliferate and, in the abdomen, they form ventral, lateral and dorsal clusters, which are the precursors of the adult abdominal muscles. In the thorax, they form populations of cells in the imaginal disks that correspond to the adepithelial cells.

The protein localises to the nucleus. In terms of biological role, involved in the establishment and dorsoventral patterning of germ layers in the embryo. The polypeptide is Protein twist (twi) (Drosophila melanogaster (Fruit fly)).